The sequence spans 484 residues: Cysteine--tRNA ligase (484 aa).

Cys27 is a Zn(2+) binding site. Residues 29-39 (PTTYNYIHLGN) carry the 'HIGH' region motif. 3 residues coordinate Zn(2+): Cys207, His232, and Glu236. Residues 264 to 268 (KMSKS) carry the 'KMSKS' region motif. Lys267 lines the ATP pocket.

The protein belongs to the class-I aminoacyl-tRNA synthetase family. Monomer. The cofactor is Zn(2+).

It is found in the cytoplasm. It carries out the reaction tRNA(Cys) + L-cysteine + ATP = L-cysteinyl-tRNA(Cys) + AMP + diphosphate. This chain is Cysteine--tRNA ligase, found in Pelotomaculum thermopropionicum (strain DSM 13744 / JCM 10971 / SI).